Reading from the N-terminus, the 249-residue chain is Probable GDP-mannose transporter 2 (249 aa).

Residues 1 to 15 (MIYTSSKSLQYLAVP) lie on the Lumenal side of the membrane. A helical transmembrane segment spans residues 16–36 (IYTIFKNLTIILIAYGEVLFF). At 37-47 (GGKVTSMELTS) the chain is on the cytoplasmic side. The helical transmembrane segment at 48-68 (FIMMVLSSVVATWGDQQAIAI) threads the bilayer. The Lumenal portion of the chain corresponds to 69-84 (KASSLEDLDQELVEST). Residues 85-105 (IFVLNPGYLWMFTNCISSALF) traverse the membrane as a helical segment. Residues 106–122 (VLIMRKRIRLTNFKDYD) lie on the Cytoplasmic side of the membrane. The chain crosses the membrane as a helical span at residues 123-143 (TMFYNNVLALPLLLVFSFIME). The Lumenal portion of the chain corresponds to 144–159 (DWSTKNLSVNLSADSL). N-linked (GlcNAc...) asparagine glycans are attached at residues Asn149 and Asn153. A helical membrane pass occupies residues 160 to 180 (AAMVISGLMSVGISYCSGWCV). Residues 181-186 (RVTSST) are Cytoplasmic-facing. The chain crosses the membrane as a helical span at residues 187 to 207 (TYSMVGALNKLPIALAGLVFF). Residues 208–211 (DAPK) lie on the Lumenal side of the membrane. A helical membrane pass occupies residues 212–232 (NFLSFFSIFLGFLSGLLYAVA). The Cytoplasmic portion of the chain corresponds to 233–249 (KQKKIQQQKVLAATLEK).

This sequence belongs to the TPT transporter family. SLC35D subfamily.

The protein resides in the golgi apparatus membrane. It localises to the cytoplasmic vesicle membrane. Its subcellular location is the endoplasmic reticulum membrane. Involved in the import of GDP-mannose from the cytoplasm into the Golgi lumen. The chain is Probable GDP-mannose transporter 2 (HVG1) from Saccharomyces cerevisiae (strain RM11-1a) (Baker's yeast).